The chain runs to 397 residues: Subtilisin-like protease 12 (397 aa).

An N-terminal signal peptide occupies residues 1 to 19 (MSIFKLMVIYFTLFWVVNA). Residues 20–116 (AQLLDLDSHG…VEPNREMKAA (97 aa)) constitute a propeptide that is removed on maturation. The Inhibitor I9 domain maps to 35–115 (YIVVMKNGVS…FVEPNREMKA (81 aa)). N-linked (GlcNAc...) asparagine glycans are attached at residues N123, N136, and N150. The 273-residue stretch at 125–397 (TWGLARISHM…DKLLYNGSGA (273 aa)) folds into the Peptidase S8 domain. Active-site charge relay system residues include D157 and H188. N-linked (GlcNAc...) asparagine glycosylation is found at N249, N305, and N334. S343 acts as the Charge relay system in catalysis. N-linked (GlcNAc...) asparagine glycans are attached at residues N385 and N393.

Belongs to the peptidase S8 family.

It localises to the secreted. Its function is as follows. Secreted subtilisin-like serine protease with keratinolytic activity that contributes to pathogenicity. The polypeptide is Subtilisin-like protease 12 (SUB12) (Arthroderma gypseum (strain ATCC MYA-4604 / CBS 118893) (Microsporum gypseum)).